We begin with the raw amino-acid sequence, 141 residues long: Meiotically up-regulated gene 118 protein (141 aa).

Positions 106 to 115 (LSSQKSARQP) are enriched in polar residues. The interval 106–141 (LSSQKSARQPTKTVASSSSSSSKSTTVSKSSSKSQV) is disordered. The span at 116 to 141 (TKTVASSSSSSSKSTTVSKSSSKSQV) shows a compositional bias: low complexity.

Its subcellular location is the nucleus. Functionally, has a role in meiosis. The polypeptide is Meiotically up-regulated gene 118 protein (mug118) (Schizosaccharomyces pombe (strain 972 / ATCC 24843) (Fission yeast)).